We begin with the raw amino-acid sequence, 248 residues long: MNIEKHLISLINDLCQISGVEVGQHFYWQLGGFQVHAQVLITSWVVIVLLSGLAFVTTRDLRTIPTGGQNFVEYVLEFIRDLTRTQIGEEEYRPWVPFIGTLFLFIFVSNWSGALFPWKIIQLPHGELAAPTNDINTTVALALLTSVAYFYAGLHKKGLSYFGRYIKPTPILLPINILEDFTKPLSLSFRLFGNILADELVVAVLISLVPLVVPIPMMFLGLFTSAIQALIFATLAAAYIGESMEGHH.

5 helical membrane passes run 37 to 57 (AQVLITSWVVIVLLSGLAFVT), 96 to 116 (VPFIGTLFLFIFVSNWSGALF), 135 to 155 (INTTVALALLTSVAYFYAGLH), 200 to 220 (LVVAVLISLVPLVVPIPMMFL), and 221 to 241 (GLFTSAIQALIFATLAAAYIG).

The protein belongs to the ATPase A chain family. In terms of assembly, F-type ATPases have 2 components, CF(1) - the catalytic core - and CF(0) - the membrane proton channel. CF(1) has five subunits: alpha(3), beta(3), gamma(1), delta(1), epsilon(1). CF(0) has four main subunits: a, b, b' and c.

The protein resides in the plastid. Its subcellular location is the chloroplast thylakoid membrane. Functionally, key component of the proton channel; it plays a direct role in the translocation of protons across the membrane. This is ATP synthase subunit a, chloroplastic from Psilotum nudum (Whisk fern).